The primary structure comprises 96 residues: Putative pterin-4-alpha-carbinolamine dehydratase (96 aa).

The protein belongs to the pterin-4-alpha-carbinolamine dehydratase family.

The enzyme catalyses (4aS,6R)-4a-hydroxy-L-erythro-5,6,7,8-tetrahydrobiopterin = (6R)-L-erythro-6,7-dihydrobiopterin + H2O. This Paraburkholderia phytofirmans (strain DSM 17436 / LMG 22146 / PsJN) (Burkholderia phytofirmans) protein is Putative pterin-4-alpha-carbinolamine dehydratase.